Here is a 1193-residue protein sequence, read N- to C-terminus: Falcilysin (1193 aa).

Residue H129 participates in Zn(2+) binding. The active-site Proton acceptor is the E132. Zn(2+) contacts are provided by H133 and E243. The disordered stretch occupies residues 376 to 404 (DKTNNHNNNHSNNQSSENNGYSNGSHSSD). The segment covering 380–394 (NHNNNHSNNQSSENN) has biased composition (low complexity). Residues 395–404 (GYSNGSHSSD) show a composition bias toward polar residues. Residues 583 to 619 (LLEGDENYAQEQENLEKQELKKRIENFNEQEKEQVIK) are a coiled coil.

This sequence belongs to the peptidase M16 family. In terms of assembly, monomer. Component of the hemozoin formation complex (HFC) composed of falcipains FP2A and/or FP2B, plasmepsins PMII, PMIII/HAP and PMIV, heme detoxifying protein HDP and falcilysin FLN. The HFC complex is involved in hemoglobin degradation and detoxification of heme in the food vacuole during the asexual blood stage. The cofactor is Zn(2+). Does not require processing for targeting to the food vacuole or maturation.

The protein localises to the vacuole membrane. Its subcellular location is the plastid. The protein resides in the apicoplast. It is found in the vesicle. Functionally, in the food vacuole, acts downstream of proteases plasmepsins PMI and PMII and falcipains during the catabolism of host hemoglobin by cleaving peptide fragments of alpha and beta hemoglobin subunits generated by PMI and PMII and falcipains. In the apicoplast, degrades apicoplast transit peptides after their cleavage. Prefers bulky hydrophobic amino acids in the P1' position at both acidic and neutral pH. At P2', prefers hydrophobic residues at acidic pH; at neutral pH, these same residues are abundant but prefers Arg. At P3', prefers hydrophobic residues, especially Met, at both pH conditions. At P4' and P5', prefers acidic residues at acidic pH, however, at neutral pH, the enzyme is less selective at these positions. The optimal site cleavage at acidic pH is YNEHS-|-FFMEE and, at neutral pH, MKRHS-|-FRMRG. This Plasmodium falciparum (isolate 3D7) protein is Falcilysin.